We begin with the raw amino-acid sequence, 281 residues long: Large ribosomal subunit protein uL2 (281 aa).

2 disordered regions span residues 1–23 (MAVKHYKPVTNGRRNMSSLDYSK) and 224–281 (RGSV…KDSK). A compositionally biased stretch (polar residues) spans 12–23 (GRRNMSSLDYSK). Residues 261 to 281 (KTRKTKKSSTKLILRRRKDSK) are compositionally biased toward basic residues.

The protein belongs to the universal ribosomal protein uL2 family. As to quaternary structure, part of the 50S ribosomal subunit. Forms a bridge to the 30S subunit in the 70S ribosome.

Its function is as follows. One of the primary rRNA binding proteins. Required for association of the 30S and 50S subunits to form the 70S ribosome, for tRNA binding and peptide bond formation. It has been suggested to have peptidyltransferase activity; this is somewhat controversial. Makes several contacts with the 16S rRNA in the 70S ribosome. This is Large ribosomal subunit protein uL2 from Mycoplasmopsis agalactiae (strain NCTC 10123 / CIP 59.7 / PG2) (Mycoplasma agalactiae).